The primary structure comprises 208 residues: Large ribosomal subunit protein uL4 (208 aa).

The interval 42 to 77 (SMRQGTHKTKTKTEVSGGGRKPWRQKGTGRARQGSI) is disordered.

Belongs to the universal ribosomal protein uL4 family. As to quaternary structure, part of the 50S ribosomal subunit.

Its function is as follows. One of the primary rRNA binding proteins, this protein initially binds near the 5'-end of the 23S rRNA. It is important during the early stages of 50S assembly. It makes multiple contacts with different domains of the 23S rRNA in the assembled 50S subunit and ribosome. Forms part of the polypeptide exit tunnel. The chain is Large ribosomal subunit protein uL4 from Spiroplasma kunkelii.